Here is a 296-residue protein sequence, read N- to C-terminus: uncharacterized protein (296 aa).

The N-terminal 57 residues, 1-57 (MTSFLSFSAISAHPPTFSGASFRPRSFSPRLFKSCVKCTYAEAGLSSASWSAPIDIV), are a transit peptide targeting the chloroplast.

This sequence belongs to the NAD(P)-dependent epimerase/dehydratase family.

Its subcellular location is the plastid. It localises to the chloroplast. The protein resides in the plastoglobule. This is an uncharacterized protein from Arabidopsis thaliana (Mouse-ear cress).